A 359-amino-acid polypeptide reads, in one-letter code: N-acetyl-gamma-glutamyl-phosphate reductase (359 aa).

The active site involves Cys-162.

It belongs to the NAGSA dehydrogenase family. Type 1 subfamily.

The protein localises to the cytoplasm. The catalysed reaction is N-acetyl-L-glutamate 5-semialdehyde + phosphate + NADP(+) = N-acetyl-L-glutamyl 5-phosphate + NADPH + H(+). It participates in amino-acid biosynthesis; L-arginine biosynthesis; N(2)-acetyl-L-ornithine from L-glutamate: step 3/4. In terms of biological role, catalyzes the NADPH-dependent reduction of N-acetyl-5-glutamyl phosphate to yield N-acetyl-L-glutamate 5-semialdehyde. This is N-acetyl-gamma-glutamyl-phosphate reductase from Prochlorococcus marinus (strain MIT 9211).